A 285-amino-acid polypeptide reads, in one-letter code: MARCO-like protein (285 aa).

Residues Met1 to Thr20 form the signal peptide. N-linked (GlcNAc...) asparagine glycosylation is present at Asn24. Disordered stretches follow at residues Asn47–Gly77 and Gly91–Leu285. Composition is skewed to polar residues over residues Lys57–Pro67 and Ser105–Pro114. Over residues Glu115–Gln128 the composition is skewed to low complexity. Over residues Ile134–Asp145 the composition is skewed to polar residues. The span at Gly160–Gln173 shows a compositional bias: low complexity. Residues His174 to Asn185 show a composition bias toward polar residues. The segment covering Leu186–Gly220 has biased composition (low complexity). Residues Asn221–Leu285 show a composition bias toward polar residues.

In Homo sapiens (Human), this protein is MARCO-like protein.